Consider the following 358-residue polypeptide: MRDRLLAAEKVRAIEWRDSTLYLLDQRALPFEESWIAYDSAAGVAEAIRSMVVCGAPAIGISAAYGLVLAACGRSVAGGDWFAALEEDFTLLVDAAPAAVNLSWALNRMRERLERVREHADPLAALEAEALAIHESDREANLTMAQLGVDLIRRHQGNPQALLTHSNTGALATGGFGTALGVIRAAWLEGMVERVYADETRPWLQGSRLTAWELASEGIPVTVNVDAAAAHIMKTKGVTWVVVGADRITANGDVANQIGTYQLAVNAMHHGVRFMVVAPSSSIDMSLASGDDIPLAERAGEELLEIAGKRLGEGVEGFNPLFDVTPADLIDAIVTEKGVVERPDTAKMAQLMCRKRLH.

Substrate-binding positions include 54-56 (CGA) and Q205. The Proton donor role is filled by D246. Residue 256 to 257 (NQ) participates in substrate binding.

The protein belongs to the eIF-2B alpha/beta/delta subunits family. MtnA subfamily.

The catalysed reaction is 5-(methylsulfanyl)-alpha-D-ribose 1-phosphate = 5-(methylsulfanyl)-D-ribulose 1-phosphate. It functions in the pathway amino-acid biosynthesis; L-methionine biosynthesis via salvage pathway; L-methionine from S-methyl-5-thio-alpha-D-ribose 1-phosphate: step 1/6. Its function is as follows. Catalyzes the interconversion of methylthioribose-1-phosphate (MTR-1-P) into methylthioribulose-1-phosphate (MTRu-1-P). The chain is Methylthioribose-1-phosphate isomerase from Pseudomonas fluorescens (strain ATCC BAA-477 / NRRL B-23932 / Pf-5).